Consider the following 471-residue polypeptide: Vitellogenic carboxypeptidase (471 aa).

Positions 1 to 19 (MVKFHLLVLIAFTCYTCSD) are cleaved as a signal peptide. The N-linked (GlcNAc...) asparagine glycan is linked to Asn135. Residues Ser207, Asp391, and His448 contribute to the active site.

Belongs to the peptidase S10 family. Synthesized in the fat body of vitellogenic females, secreted into the hemolymph and accumulates in yolk bodies of developing oocytes.

Its subcellular location is the secreted. Functionally, may play a role in activating hydrolytic enzymes that are involved in the degradation of yolk proteins in developing embryos or may function as an exopeptidase in the degradation of vitellogenin. The chain is Vitellogenic carboxypeptidase (VCP) from Aedes aegypti (Yellowfever mosquito).